We begin with the raw amino-acid sequence, 213 residues long: Proteasome subunit beta 1 (213 aa).

Residues 1–18 (MVFIAVFNGVFAMSSLPG) constitute a propeptide, removed in mature form; by autocatalysis. Thr-19 acts as the Nucleophile in catalysis.

The protein belongs to the peptidase T1B family. In terms of assembly, the 20S proteasome core is composed of 14 alpha and 14 beta subunits that assemble into four stacked heptameric rings, resulting in a barrel-shaped structure. The two inner rings, each composed of seven catalytic beta subunits, are sandwiched by two outer rings, each composed of seven alpha subunits. The catalytic chamber with the active sites is on the inside of the barrel. Has a gated structure, the ends of the cylinder being occluded by the N-termini of the alpha-subunits. Is capped at one or both ends by the proteasome regulatory ATPase, PAN.

It is found in the cytoplasm. The catalysed reaction is Cleavage of peptide bonds with very broad specificity.. The formation of the proteasomal ATPase PAN-20S proteasome complex, via the docking of the C-termini of PAN into the intersubunit pockets in the alpha-rings, triggers opening of the gate for substrate entry. Interconversion between the open-gate and close-gate conformations leads to a dynamic regulation of the 20S proteasome proteolysis activity. Its function is as follows. Component of the proteasome core, a large protease complex with broad specificity involved in protein degradation. This Staphylothermus marinus (strain ATCC 43588 / DSM 3639 / JCM 9404 / F1) protein is Proteasome subunit beta 1.